A 516-amino-acid chain; its full sequence is (R)-citramalate synthase CimA (516 aa).

The Pyruvate carboxyltransferase domain maps to 8–269 (LEILDVTLRD…KTNINEIAIT (262 aa)). Catalysis depends on Arg-16, which acts as the Proton donor. Pyruvate is bound by residues 16–17 (RD) and Tyr-144. Asp-17 contacts Mn(2+). Residue Glu-146 is the Proton acceptor of the active site. Thr-179 provides a ligand contact to pyruvate. Positions 207 and 209 each coordinate Mn(2+).

The protein belongs to the alpha-IPM synthase/homocitrate synthase family. Homodimer. It depends on Mn(2+) as a cofactor.

It catalyses the reaction pyruvate + acetyl-CoA + H2O = (3R)-citramalate + CoA + H(+). Its pathway is amino-acid biosynthesis; L-isoleucine biosynthesis; 2-oxobutanoate from pyruvate: step 1/3. With respect to regulation, regulated by the end-product isoleucine via a feedback inhibition. The binding of isoleucine has inhibitory effects on the binding of both pyruvate and acetyl-CoA. May act via conformational change of the dimer interface of the regulatory domain, leading to inhibition of the catalytic reaction. Its function is as follows. Catalyzes the condensation of pyruvate and acetyl-coenzyme A to form (R)-citramalate. Shows strict substrate specificity for pyruvate. Cannot use alpha-ketoisovalerate, alpha-ketobutyrate, alpha-ketoisocaproate, alpha-ketoglutarate or glyoxylate. The chain is (R)-citramalate synthase CimA from Leptospira interrogans serogroup Icterohaemorrhagiae serovar Lai (strain 56601).